The primary structure comprises 126 residues: MRHKNSGKKLNRTPSHRKALFRNMANELIKHGKICTTETKAKELRRIVEPLITLALRNDLHSRRLAFQSMGDHQLVKHLFNNVAPAFVNVPGGYTRITRLALRRKGDCAPMAMIEFTCQKIDEKSI.

This sequence belongs to the bacterial ribosomal protein bL17 family. In terms of assembly, part of the 50S ribosomal subunit. Contacts protein L32.

The chain is Large ribosomal subunit protein bL17 from Lawsonia intracellularis (strain PHE/MN1-00).